The primary structure comprises 149 residues: UPF0179 protein MM_0589 (149 aa).

Belongs to the UPF0179 family.

This Methanosarcina mazei (strain ATCC BAA-159 / DSM 3647 / Goe1 / Go1 / JCM 11833 / OCM 88) (Methanosarcina frisia) protein is UPF0179 protein MM_0589.